The following is a 515-amino-acid chain: MDEFHRYGKEDNSRQQCFLYPLFFQEDLYAISHDHYLDGSSSSEPMEHLSSNDQFSFLTVKRLIGQIRQQNHSIVLFVNCAPNPLADCKKSSYSESVLEGLTLVLEVPFSIRSKYSVEGMNEWKSFRSIHSIFPFLEDKFPHSNYISDARIPYSIHPEILVRTFRRLIRDAPSLHPLRSVLYEYRNSPENLQRSIIVVPRVNTRFFLFLWNYYVYECESILFSLLKRSSHSRSLAHRPFPQRTHFHRKIKHIIIFSRRNSLKSIWLLKDPKINYVRYGERSIIAIKGTHLLVKKCRYYLLLFRQCYFHLWSEPYRVCSHQLSKNCSSSPGYFLRVRMNPLFVRTKMLDELFIADLITNEFDPIVPIVPILGLLAREKFCDVSGRPISKLSWTNLTDDDILNRFDQIWRNLFHYYSGSFGRDGLYRIKYILSLSCAKTLACKHKSTIRVVRKELGPELFQKSFSKEREFDSLPFSSKAAARSQRERIWHSDIPQINPLVNSWQKIQDLKIENLFDQ.

It belongs to the intron maturase 2 family. MatK subfamily.

It localises to the plastid. It is found in the chloroplast. Functionally, usually encoded in the trnK tRNA gene intron. Probably assists in splicing its own and other chloroplast group II introns. The chain is Maturase K from Pinus sibirica (Siberian pine).